The chain runs to 234 residues: Protein rgg8 (234 aa).

It is found in the cytoplasm. The protein localises to the nucleus. This chain is Protein rgg8 (rgg8), found in Schizosaccharomyces pombe (strain 972 / ATCC 24843) (Fission yeast).